The primary structure comprises 194 residues: ATP-dependent Clp protease proteolytic subunit (194 aa).

Residue S97 is the Nucleophile of the active site. H122 is a catalytic residue.

Belongs to the peptidase S14 family. Fourteen ClpP subunits assemble into 2 heptameric rings which stack back to back to give a disk-like structure with a central cavity, resembling the structure of eukaryotic proteasomes.

It is found in the cytoplasm. The catalysed reaction is Hydrolysis of proteins to small peptides in the presence of ATP and magnesium. alpha-casein is the usual test substrate. In the absence of ATP, only oligopeptides shorter than five residues are hydrolyzed (such as succinyl-Leu-Tyr-|-NHMec, and Leu-Tyr-Leu-|-Tyr-Trp, in which cleavage of the -Tyr-|-Leu- and -Tyr-|-Trp bonds also occurs).. Its function is as follows. Cleaves peptides in various proteins in a process that requires ATP hydrolysis. Has a chymotrypsin-like activity. Plays a major role in the degradation of misfolded proteins. This chain is ATP-dependent Clp protease proteolytic subunit, found in Campylobacter jejuni subsp. jejuni serotype O:6 (strain 81116 / NCTC 11828).